Here is a 441-residue protein sequence, read N- to C-terminus: Xylose isomerase (441 aa).

Catalysis depends on residues H105 and D108. Mg(2+)-binding residues include E236, E272, H275, D300, D311, D313, and D343.

The protein belongs to the xylose isomerase family. Homotetramer. Requires Mg(2+) as cofactor.

It localises to the cytoplasm. The enzyme catalyses alpha-D-xylose = alpha-D-xylulofuranose. The sequence is that of Xylose isomerase from Mesorhizobium japonicum (strain LMG 29417 / CECT 9101 / MAFF 303099) (Mesorhizobium loti (strain MAFF 303099)).